A 523-amino-acid chain; its full sequence is 2-hydroxyisoflavanone synthase (523 aa).

A helical transmembrane segment spans residues 2-22; sequence LVELAITLLVIALFIHLRPTL. Heme is bound at residue C450.

This sequence belongs to the cytochrome P450 family. It depends on heme as a cofactor.

The protein resides in the microsome membrane. It carries out the reaction (2S)-liquiritigenin + reduced [NADPH--hemoprotein reductase] + O2 = (2R,3S)-2,4',7-trihydroxyisoflavanone + oxidized [NADPH--hemoprotein reductase] + H2O + H(+). The catalysed reaction is (2S)-naringenin + reduced [NADPH--hemoprotein reductase] + O2 = 2-hydroxy-2,3-dihydrogenistein + oxidized [NADPH--hemoprotein reductase] + H2O + H(+). In terms of biological role, 2-hydroxyisoflavanone synthase, which catalyzes the hydroxylation associated with 1,2-aryl migration of flavanones. Converts liquiritigenin and naringenin into highly unstable precursors of the isoflavones daidzein and genistein. Acts only on substrates with (2S)-chirality. The chain is 2-hydroxyisoflavanone synthase (CYP93C2) from Glycyrrhiza echinata (Licorice).